Consider the following 263-residue polypeptide: 3-deoxy-manno-octulosonate cytidylyltransferase 2 (263 aa).

Belongs to the KdsB family.

It localises to the cytoplasm. The enzyme catalyses 3-deoxy-alpha-D-manno-oct-2-ulosonate + CTP = CMP-3-deoxy-beta-D-manno-octulosonate + diphosphate. It functions in the pathway nucleotide-sugar biosynthesis; CMP-3-deoxy-D-manno-octulosonate biosynthesis; CMP-3-deoxy-D-manno-octulosonate from 3-deoxy-D-manno-octulosonate and CTP: step 1/1. It participates in bacterial outer membrane biogenesis; lipopolysaccharide biosynthesis. Its function is as follows. Activates KDO (a required 8-carbon sugar) for incorporation into bacterial lipopolysaccharide in Gram-negative bacteria. This Paraburkholderia phytofirmans (strain DSM 17436 / LMG 22146 / PsJN) (Burkholderia phytofirmans) protein is 3-deoxy-manno-octulosonate cytidylyltransferase 2.